Here is a 338-residue protein sequence, read N- to C-terminus: Tetraacyldisaccharide 4'-kinase (338 aa).

An ATP-binding site is contributed by T53 to T60.

This sequence belongs to the LpxK family.

The enzyme catalyses a lipid A disaccharide + ATP = a lipid IVA + ADP + H(+). The protein operates within glycolipid biosynthesis; lipid IV(A) biosynthesis; lipid IV(A) from (3R)-3-hydroxytetradecanoyl-[acyl-carrier-protein] and UDP-N-acetyl-alpha-D-glucosamine: step 6/6. Functionally, transfers the gamma-phosphate of ATP to the 4'-position of a tetraacyldisaccharide 1-phosphate intermediate (termed DS-1-P) to form tetraacyldisaccharide 1,4'-bis-phosphate (lipid IVA). This is Tetraacyldisaccharide 4'-kinase from Azorhizobium caulinodans (strain ATCC 43989 / DSM 5975 / JCM 20966 / LMG 6465 / NBRC 14845 / NCIMB 13405 / ORS 571).